We begin with the raw amino-acid sequence, 313 residues long: Ribosomal RNA small subunit methyltransferase I (313 aa).

The segment at 1 to 23 is disordered; that stretch reads MASIQLARTTRGGDGVARADGTR.

It belongs to the methyltransferase superfamily. RsmI family.

It is found in the cytoplasm. It carries out the reaction cytidine(1402) in 16S rRNA + S-adenosyl-L-methionine = 2'-O-methylcytidine(1402) in 16S rRNA + S-adenosyl-L-homocysteine + H(+). Its function is as follows. Catalyzes the 2'-O-methylation of the ribose of cytidine 1402 (C1402) in 16S rRNA. This Micromonospora olivasterospora protein is Ribosomal RNA small subunit methyltransferase I.